The sequence spans 697 residues: Sodium-dependent phosphate transport protein 2B (697 aa).

The segment at 1–45 is disordered; sequence MAPWPELENAQPNPGKFIEGASGPQSSIPAKDKEASKTNDNGTPV. The Cytoplasmic portion of the chain corresponds to 1 to 91; sequence MAPWPELENA…WSERDTKGKT (91 aa). The chain crosses the membrane as a helical span at residues 92–112; sequence LCIFQGVGKFILLLGFLYLFV. Residues 113-136 lie on the Extracellular side of the membrane; sequence CSLDVLSSAFQLVGGKVAGQFFSN. The chain crosses the membrane as a helical span at residues 137-157; the sequence is NSIMSNPVAGLVIGVLVTVMV. At 158 to 213 the chain is on the cytoplasmic side; it reads QSSSTSSSIIVSMVASSLLTVRAAIPIIMGANIGTSITNTIVALMQAGDRNEFRRA. A helical transmembrane segment spans residues 214–234; that stretch reads FAGATVHDFFNWLSVFVLLPL. The Extracellular segment spans residues 235 to 363; sequence EAATHYLEIL…FVNFSLPDLA (129 aa). 4 N-linked (GlcNAc...) asparagine glycosylation sites follow: Asn-295, Asn-308, Asn-321, and Asn-356. Cys-303 and Cys-350 form a disulfide bridge. A helical transmembrane segment spans residues 364 to 384; sequence VGIILLTVSLVVLCGCLIMIV. Residues 385-408 are Cytoplasmic-facing; the sequence is KLLGSVLRGQVATVIKKTLNTDFP. The helical transmembrane segment at 409 to 429 threads the bilayer; it reads FPFAWLTGYLAILVGAGMTFI. Residues 430–486 lie on the Extracellular side of the membrane; that stretch reads VQSSSVFTSAMTPLIGIGVISIERAYPLTLGSNIGTTTTAILAALASPGNTLRSSLQ. A helical membrane pass occupies residues 487–507; sequence IALCHFFFNISGILLWYPIPF. Residues 508 to 526 are Cytoplasmic-facing; it reads TRLPIRLAKGLGNISAKYR. Residues 527 to 547 traverse the membrane as a helical segment; sequence WFAVFYLIFFFFVTPLTVFGL. Residues 548–551 are Extracellular-facing; that stretch reads SLAG. A helical membrane pass occupies residues 552 to 572; it reads WPVLVGVGVPIILLLLLVLCL. Topologically, residues 573–696 are cytoplasmic; it reads RMLQFRCPRI…SMKALSNTTV (124 aa).

This sequence belongs to the SLC34A transporter family. In terms of tissue distribution, highly abundant in the ileum of small intestine, whereas it is almost absent in the duodenum and in the jejunum.

The protein resides in the apical cell membrane. It carries out the reaction 3 Na(+)(out) + phosphate(out) = 3 Na(+)(in) + phosphate(in). Its function is as follows. Involved in actively transporting phosphate into cells via Na(+) cotransport. The sequence is that of Sodium-dependent phosphate transport protein 2B (Slc34a2) from Mus musculus (Mouse).